Consider the following 652-residue polypeptide: Acetyl-coenzyme A synthetase (652 aa).

CoA-binding positions include 191-194 (RAGR), Thr-311, and Asn-335. ATP-binding positions include 387 to 389 (GEP), 411 to 416 (DTWWQT), Asp-500, and Arg-515. Ser-523 is a CoA binding site. Residue Arg-526 participates in ATP binding. Val-537, His-539, and Ile-542 together coordinate Mg(2+). Arg-584 is a CoA binding site. Position 609 is an N6-acetyllysine; by Pat (Lys-609).

Belongs to the ATP-dependent AMP-binding enzyme family. In terms of assembly, monomer. Requires Mg(2+) as cofactor. In terms of processing, acetylated. Deacetylation by the SIR2-homolog deacetylase activates the enzyme.

It carries out the reaction acetate + ATP + CoA = acetyl-CoA + AMP + diphosphate. Its function is as follows. Catalyzes the conversion of acetate into acetyl-CoA (AcCoA), an essential intermediate at the junction of anabolic and catabolic pathways. Acs undergoes a two-step reaction. In the first half reaction, Acs combines acetate with ATP to form acetyl-adenylate (AcAMP) intermediate. In the second half reaction, it can then transfer the acetyl group from AcAMP to the sulfhydryl group of CoA, forming the product AcCoA. Required for acetate recapture but not for acetate excretion when this organism is grown on ethanolamine. In terms of biological role, enables the cell to use acetate during aerobic growth to generate energy via the TCA cycle, and biosynthetic compounds via the glyoxylate shunt. Acetylates CheY, the response regulator involved in flagellar movement and chemotaxis. This Salmonella typhimurium (strain LT2 / SGSC1412 / ATCC 700720) protein is Acetyl-coenzyme A synthetase.